Here is a 193-residue protein sequence, read N- to C-terminus: Large ribosomal subunit protein eL18 (193 aa).

Residues 158–193 are disordered; that stretch reads HFGAAGVPGSHAKPHVSSRGKERQRSSKRRHAFRHK. The segment covering 183–193 has biased composition (basic residues); the sequence is SSKRRHAFRHK.

It belongs to the eukaryotic ribosomal protein eL18 family.

The protein resides in the cytoplasm. The sequence is that of Large ribosomal subunit protein eL18 (RPL18-A) from Trypanosoma brucei brucei (strain 927/4 GUTat10.1).